Consider the following 475-residue polypeptide: Ribulose bisphosphate carboxylase large chain (475 aa).

The propeptide occupies 1–2 (MS). The residue at position 3 (Pro-3) is an N-acetylproline. Lys-14 is subject to N6,N6,N6-trimethyllysine. Substrate is bound by residues Asn-123 and Thr-173. The active-site Proton acceptor is the Lys-175. Lys-177 lines the substrate pocket. Residues Lys-201, Asp-203, and Glu-204 each coordinate Mg(2+). Position 201 is an N6-carboxylysine (Lys-201). His-294 (proton acceptor) is an active-site residue. Residues Arg-295, His-327, and Ser-379 each contribute to the substrate site.

The protein belongs to the RuBisCO large chain family. Type I subfamily. As to quaternary structure, heterohexadecamer of 8 large chains and 8 small chains; disulfide-linked. The disulfide link is formed within the large subunit homodimers. Requires Mg(2+) as cofactor. The disulfide bond which can form in the large chain dimeric partners within the hexadecamer appears to be associated with oxidative stress and protein turnover.

It localises to the plastid. Its subcellular location is the chloroplast. The enzyme catalyses 2 (2R)-3-phosphoglycerate + 2 H(+) = D-ribulose 1,5-bisphosphate + CO2 + H2O. It carries out the reaction D-ribulose 1,5-bisphosphate + O2 = 2-phosphoglycolate + (2R)-3-phosphoglycerate + 2 H(+). Its function is as follows. RuBisCO catalyzes two reactions: the carboxylation of D-ribulose 1,5-bisphosphate, the primary event in carbon dioxide fixation, as well as the oxidative fragmentation of the pentose substrate in the photorespiration process. Both reactions occur simultaneously and in competition at the same active site. The polypeptide is Ribulose bisphosphate carboxylase large chain (Calycanthus floridus var. glaucus (Eastern sweetshrub)).